A 143-amino-acid chain; its full sequence is Large ribosomal subunit protein uL13 (143 aa).

Belongs to the universal ribosomal protein uL13 family. In terms of assembly, part of the 50S ribosomal subunit.

In terms of biological role, this protein is one of the early assembly proteins of the 50S ribosomal subunit, although it is not seen to bind rRNA by itself. It is important during the early stages of 50S assembly. The protein is Large ribosomal subunit protein uL13 of Neisseria meningitidis serogroup C (strain 053442).